The primary structure comprises 463 residues: Fumarate hydratase class II (463 aa).

Residues 97 to 99, 128 to 131, 138 to 140, and Thr186 each bind substrate; these read SGT, HPND, and SSN. The active-site Proton donor/acceptor is the His187. The active site involves Ser317. Substrate-binding positions include Ser318 and 323–325; that span reads KVN.

Belongs to the class-II fumarase/aspartase family. Fumarase subfamily. In terms of assembly, homotetramer.

Its subcellular location is the cytoplasm. It carries out the reaction (S)-malate = fumarate + H2O. Its pathway is carbohydrate metabolism; tricarboxylic acid cycle; (S)-malate from fumarate: step 1/1. Its function is as follows. Involved in the TCA cycle. Catalyzes the stereospecific interconversion of fumarate to L-malate. The sequence is that of Fumarate hydratase class II from Helicobacter pylori (strain J99 / ATCC 700824) (Campylobacter pylori J99).